Consider the following 1082-residue polypeptide: MATQVMGQSSGGGSLFNNSANMGMALTNDMYDLHELSKAELAAPQLIMLANVALTGEASGSCCDYLVGEERQMAELMPVGDNHFSESEGEGLEESADLKGLENMELGSLELSAVEPQPVFEASAAPEIYSANKDPAPETPVAEDKCRSSKAKPFRCKPCQYEAESEEQFVHHIRIHSAKKFFVEESAEKQAKAWESGSSPAEEGEFSKGPIRCDRCGYNTNRYDHYMAHLKHHLRAGENERIYKCIICTYTTVSEYHWRKHLRNHFPRKVYTCSKCNYFSDRKNNYVQHVRTHTGERPYKCELCPYSSSQKTHLTRHMRTHSGEKPFKCDQCNYVASNQHEVTRHARQVHNGPKPLNCPHCDYKTADRSNFKKHVELHVNPRQFNCPVCDYAASKKCNLQYHFKSKHPTCPSKTMDVSKVKLKKTKKREADLLNNAVSNEKMENEQTKTKGDVSGKKNEKPVKAVGKDASKEKKPGSSVSVVQVTTRTRKSAVAAETKAAEVKHTDGQTGNNPEKPCKAKKNKRKKDAEAHPSEEPVNEGPVTKKKKKSECKSKIGTNVPKGGGRAEERPGVKKQSASLKKGTKKTPPKTKTSKKGGKLAPKGMGQTEPSSGALAQVGVSPDPALIQAEVTGSGSSQTELPSPMDIAKSEPAQMEVSLTGPPPVEPAQMEPSPAKPPQVEAPTYPQPPQRGPAPPTGPAPPTGPAPPTEPAPPTGLAEMEPSPTEPSQKEPPPSMEPPCPEELPQAEPPPMEDCQKELPSPVEPAQIEVAQTAPTQVQEEPPPVSEPPRVKPTKRSSLRKDRAEKELSLLSEMARQEQVLMGVGLVPVRDSKLLKGNKSAQDPPAPPSPSPKGNSREETPKDQEMVSDGEGTIVFPLKKGGPEEAGESPAELAALKESARVSSSEQNSAMPEGGASHSKCQTGSSGLCDVDTEQKTDTVPMKDSAAEPVSPPTPTVDRDAGSPAVVASPPITLAENESQEIDEDEGIHSHDGSDLSDNMSEGSDDSGLHGARPTPPEATSKNGKAGLAGKVTEGEFVCIFCDRSFRKEKDYSKHLNRHLVNVYFLEEAAEEQEEQEEREEQE.

The interval 32 to 117 (DLHELSKAEL…SLELSAVEPQ (86 aa)) is interaction with SIN3A. The segment at 43–57 (APQLIMLANVALTGE) is interaction with SIN3B. The interaction with ZFP90 stretch occupies residues 140–413 (PVAEDKCRSS…KSKHPTCPSK (274 aa)). Residues 154–176 (FRCKPCQYEAESEEQFVHHIRIH) form a C2H2-type 1 zinc finger. Positions 196–207 (SGSSPAEEGEFS) are required for binding to the neuron-restrictive silencer element. 7 consecutive C2H2-type zinc fingers follow at residues 211–235 (IRCDRCGYNTNRYDHYMAHLKHHLR), 243–265 (YKCIICTYTTVSEYHWRKHLRNH), 271–293 (YTCSKCNYFSDRKNNYVQHVRTH), 299–321 (YKCELCPYSSSQKTHLTRHMRTH), 327–350 (FKCDQCNYVASNQHEVTRHARQVH), 356–378 (LNCPHCDYKTADRSNFKKHVELH), and 384–407 (FNCPVCDYAASKKCNLQYHFKSKH). Disordered regions lie at residues 408–809 (PTCP…ELSL) and 831–1027 (SKLL…KAGL). Residues 440–475 (EKMENEQTKTKGDVSGKKNEKPVKAVGKDASKEKKP) show a composition bias toward basic and acidic residues. A compositionally biased stretch (low complexity) spans 477-497 (SSVSVVQVTTRTRKSAVAAET). Residues 581-597 (KGTKKTPPKTKTSKKGG) are compositionally biased toward basic residues. The span at 630–640 (VTGSGSSQTEL) shows a compositional bias: polar residues. 2 stretches are compositionally biased toward pro residues: residues 684–713 (YPQPPQRGPAPPTGPAPPTGPAPPTEPAPP) and 729–751 (KEPPPSMEPPCPEELPQAEPPPM). Composition is skewed to basic and acidic residues over residues 798–807 (LRKDRAEKEL) and 854–864 (NSREETPKDQE). The segment covering 900-909 (RVSSSEQNSA) has biased composition (polar residues). Ser-950 is subject to Phosphoserine. An interaction with RCOR1 region spans residues 985 to 1063 (EGIHSHDGSD…HLNRHLVNVY (79 aa)). The segment at 1036–1058 (FVCIFCDRSFRKEKDYSKHLNRH) adopts a C2H2-type 9 zinc-finger fold.

Isoform 1 and isoform 2 form heterodimers. Isoform 2: Forms homodimers and homooligomers; binds to the neuron-restrictive silencer element (NRSE) as monomer. Interacts with SIN3A, SIN3B and RCOR1. Interacts with CDYL. Interacts with EHMT1 and EHMT2 only in the presence of CDYL. Part of a complex containing at least CDYL, REST, WIZ, SETB1, EHMT1 and EHMT2. Interacts (via zinc-finger DNA-binding domain) with ZFP90 (via N- and C-termini); the interaction inhibits REST repressor activity. Interacts (via C2H2-type zinc finger 5) with PRICKLE1. Interacts with FBXW11 and BTRC. Interacts with USP7. In terms of processing, O-glycosylated. Phosphorylated; phosphorylation is required for ubiquitination. Post-translationally, ubiquitinated; ubiquitination is mediated by BTRC and leads to proteasomal degradation in G2 phase. Ubiquitination increases during neuronal differentiation. Deubiquitinated by USP7; leading to its stabilization and promoting the maintenance of neural progenitor cells. As to expression, expressed in the hippocampus, including quiescent neuronal progenitor (QNP) cells, transient-amplifying progenitor (TAP) cells, neuroblasts and mature neurons (at protein level). Expressed in embryonic stem cells (at protein level). Expressed in many non-neuronal tissues including the heart and liver. Abundantly expressed in osteoblastic lineage cells. Expressed in the spleen, kidney, blood cells, cortex, neocortex and in the utricle, saccule and organ of Corti of the inner ear. Isoform 2: Expressed in the cortex, neocortex and in the utricle, saccule and organ of Corti of the inner ear.

Its subcellular location is the nucleus. It is found in the cytoplasm. Its function is as follows. Transcriptional repressor which binds neuron-restrictive silencer element (NRSE) and represses neuronal gene transcription in non-neuronal cells. Restricts the expression of neuronal genes by associating with two distinct corepressors, SIN3A and RCOR1, which in turn recruit histone deacetylase to the promoters of REST-regulated genes. Mediates repression by recruiting the BHC complex at RE1/NRSE sites which acts by deacetylating and demethylating specific sites on histones, thereby acting as a chromatin modifier. Transcriptional repression by REST-CDYL via the recruitment of histone methyltransferase EHMT2 may be important in transformation suppression. Represses the expression of SRRM4 in non-neural cells to prevent the activation of neural-specific splicing events and to prevent production of REST isoform 2. Repressor activity may be inhibited by forming heterodimers with isoform 2, thereby preventing binding to NRSE or binding to corepressors and leading to derepression of target genes. Also maintains repression of neuronal genes in neural stem cells, and allows transcription and differentiation into neurons by dissociation from RE1/NRSE sites of target genes. Thereby is involved in maintaining the quiescent state of adult neural stem cells and preventing premature differentiation into mature neurons. Plays a role in the developmental switch in synaptic NMDA receptor composition during postnatal development, by repressing GRIN2B expression and thereby altering NMDA receptor properties from containing primarily GRIN2B to primarily GRIN2A subunits. Acts as a regulator of osteoblast differentiation. Key repressor of gene expression in hypoxia; represses genes in hypoxia by direct binding to an RE1/NRSE site on their promoter regions. May also function in stress resistance in the brain during aging; possibly by regulating expression of genes involved in cell death and in the stress response. Repressor of gene expression in the hippocampus after ischemia by directly binding to RE1/NRSE sites and recruiting SIN3A and RCOR1 to promoters of target genes, thereby promoting changes in chromatin modifications and ischemia-induced cell death. After ischemia, might play a role in repression of miR-132 expression in hippocampal neurons, thereby leading to neuronal cell death. Functionally, binds to the 3' region of the neuron-restrictive silencer element (NRSE), with lower affinity than isoform 1. Exhibits weaker repressor activity compared to isoform 1. May negatively regulate the repressor activity of isoform 1 by binding to isoform 1, thereby preventing its binding to NRSE and leading to derepression of target genes. However, in another study, does not appear to be implicated in repressor activity of a NRSE motif-containing reporter construct nor in inhibitory activity on the isoform 1 transcriptional repressor activity. Post-transcriptional inactivation of REST by SRRM4-dependent alternative splicing into isoform 2 is required in mechanosensory hair cells in the inner ear for derepression of neuronal genes, maintenance of hair cells and hearing. This chain is RE1-silencing transcription factor (Rest), found in Mus musculus (Mouse).